A 130-amino-acid chain; its full sequence is Small ribosomal subunit protein uS8 (130 aa).

It belongs to the universal ribosomal protein uS8 family. In terms of assembly, part of the 30S ribosomal subunit. Contacts proteins S5 and S12.

One of the primary rRNA binding proteins, it binds directly to 16S rRNA central domain where it helps coordinate assembly of the platform of the 30S subunit. In Shewanella frigidimarina (strain NCIMB 400), this protein is Small ribosomal subunit protein uS8.